A 241-amino-acid chain; its full sequence is Guanosine phosphorylase (241 aa).

The protein belongs to the PNP/UDP phosphorylase family.

The catalysed reaction is guanosine + phosphate = alpha-D-ribose 1-phosphate + guanine. The enzyme catalyses a purine D-ribonucleoside + phosphate = a purine nucleobase + alpha-D-ribose 1-phosphate. It catalyses the reaction inosine + phosphate = alpha-D-ribose 1-phosphate + hypoxanthine. It carries out the reaction adenosine + phosphate = alpha-D-ribose 1-phosphate + adenine. With respect to regulation, activity is higher at low KCl concentrations. Its function is as follows. Phosphorylase involved in the non-carboxylating pentose bisphosphate pathway, a nucleoside degradation pathway present in some halophilic archaea. Catalyzes the phosphorolytic cleavage of guanosine to guanine and ribose-1-phosphate (R1P). Exhibits the highest activity toward guanosine, but also shows lower activity against inosine and adenosine. The sequence is that of Guanosine phosphorylase from Halorubrum lacusprofundi (strain ATCC 49239 / DSM 5036 / JCM 8891 / ACAM 34).